A 237-amino-acid chain; its full sequence is Proteasome subunit beta type-1 (237 aa).

Belongs to the peptidase T1B family. In terms of assembly, the 26S proteasome consists of a 20S proteasome core and two 19S regulatory subunits. The 20S proteasome core is a barrel-shaped complex made of 28 subunits that are arranged in four stacked rings. The two outer rings are each formed by seven alpha subunits, and the two inner rings are formed by seven beta subunits. The proteolytic activity is exerted by three beta-subunits psmb5, psmb6 and psmb7.

It is found in the cytoplasm. It localises to the nucleus. Its function is as follows. Non-catalytic component of the 20S core proteasome complex involved in the proteolytic degradation of most intracellular proteins. This complex plays numerous essential roles within the cell by associating with different regulatory particles. Associated with two 19S regulatory particles, forms the 26S proteasome and thus participates in the ATP-dependent degradation of ubiquitinated proteins. The 26S proteasome plays a key role in the maintenance of protein homeostasis by removing misfolded or damaged proteins that could impair cellular functions, and by removing proteins whose functions are no longer required. Associated with the PA200 or PA28, the 20S proteasome mediates ubiquitin-independent protein degradation. The protein is Proteasome subunit beta type-1 of Danio rerio (Zebrafish).